The following is a 37-amino-acid chain: Large ribosomal subunit protein bL36A (37 aa).

This sequence belongs to the bacterial ribosomal protein bL36 family.

The sequence is that of Large ribosomal subunit protein bL36A from Actinobacillus pleuropneumoniae serotype 3 (strain JL03).